Here is a 256-residue protein sequence, read N- to C-terminus: Thiazole synthase (256 aa).

The active-site Schiff-base intermediate with DXP is Lys96. 1-deoxy-D-xylulose 5-phosphate-binding positions include Gly157, 183 to 184 (AG), and 205 to 206 (NT).

It belongs to the ThiG family. As to quaternary structure, homotetramer. Forms heterodimers with either ThiH or ThiS.

Its subcellular location is the cytoplasm. The enzyme catalyses [ThiS sulfur-carrier protein]-C-terminal-Gly-aminoethanethioate + 2-iminoacetate + 1-deoxy-D-xylulose 5-phosphate = [ThiS sulfur-carrier protein]-C-terminal Gly-Gly + 2-[(2R,5Z)-2-carboxy-4-methylthiazol-5(2H)-ylidene]ethyl phosphate + 2 H2O + H(+). It participates in cofactor biosynthesis; thiamine diphosphate biosynthesis. Catalyzes the rearrangement of 1-deoxy-D-xylulose 5-phosphate (DXP) to produce the thiazole phosphate moiety of thiamine. Sulfur is provided by the thiocarboxylate moiety of the carrier protein ThiS. In vitro, sulfur can be provided by H(2)S. The sequence is that of Thiazole synthase from Bacillus cereus (strain AH187).